A 132-amino-acid polypeptide reads, in one-letter code: D-ribose pyranase (132 aa).

His20 acts as the Proton donor in catalysis. Substrate-binding positions include Asp28, His99, and 121-123 (YSN).

This sequence belongs to the RbsD / FucU family. RbsD subfamily. As to quaternary structure, homodecamer.

It localises to the cytoplasm. It carries out the reaction beta-D-ribopyranose = beta-D-ribofuranose. The protein operates within carbohydrate metabolism; D-ribose degradation; D-ribose 5-phosphate from beta-D-ribopyranose: step 1/2. Its function is as follows. Catalyzes the interconversion of beta-pyran and beta-furan forms of D-ribose. The sequence is that of D-ribose pyranase from Pseudomonas putida (strain ATCC 47054 / DSM 6125 / CFBP 8728 / NCIMB 11950 / KT2440).